The following is a 323-amino-acid chain: Mortality factor 4-like protein 1 (323 aa).

The Tudor-knot domain occupies 12–62 (QEGERVLCFHGPLLYEAKCVKVAIKDKQVKYFIHHSGWNKNWDEWVPESRV). The segment at 76 to 143 (LQKANQEQYA…RKKRARVDPT (68 aa)) is disordered. Residues 94-227 (PGKKTSGLQQ…VAGIKEYFNV (134 aa)) are sufficient for interaction with SIN3A. Positions 96 to 107 (KKTSGLQQKNVD) match the Nuclear localization signal motif. Residue Lys-104 is modified to N6-acetyllysine. An interaction with RB1-1 region spans residues 125–191 (STSETPQPPR…FYLPAKKNVD (67 aa)). The interval 149–303 (TFMNRVEVKV…FLKYLAKNSA (155 aa)) is sufficient for interaction with PHF12. Residues 152-323 (NRVEVKVKIP…APPEYHRKAV (172 aa)) enclose the MRG domain. The interaction with RB1-2 stretch occupies residues 284–305 (LALLLNYLHDFLKYLAKNSATL).

In terms of assembly, component of the NuA4 histone acetyltransferase complex which contains the catalytic subunit KAT5/TIP60 and the subunits EP400, TRRAP/PAF400, BRD8/SMAP, EPC1, DMAP1/DNMAP1, RUVBL1/TIP49, RUVBL2, ING3, actin, ACTL6A/BAF53A, MORF4L1/MRG15, MORF4L2/MRGX, MRGBP, YEATS4/GAS41, VPS72/YL1 and MEAF6. The NuA4 complex interacts with MYC and the adenovirus E1A protein. MORF4L1 may also participate in the formation of NuA4 related complexes which lack the KAT5/TIP60 catalytic subunit, but which include the SWI/SNF related protein SRCAP. Component of the mSin3A histone deacetylase complex, which includes SIN3A, HDAC2, ARID4B, MORF4L1, RBBP4/RbAp48, and RBBP7/RbAp46. May also interact with PHF12 and one or more as yet undefined members of the TLE (transducin-like enhancer of split) family of transcriptional repressors. Component of the SIN3B complex, which includes SIN3B, HDAC2 or HDAC1, PHF12 and MORF4L1. Interacts with RB1 and KAT8. Interacts with the N-terminus of MRFAP1. Found in a complex composed of MORF4L1, MRFAP1 and RB1. Interacts with the entire BRCA complex, which contains BRCA1, PALB2, BRCA2 and RAD51. Interacts with PALB2. Forms a complex with MSL1 and NUPR1.

Its subcellular location is the nucleus. In terms of biological role, component of the NuA4 histone acetyltransferase (HAT) complex which is involved in transcriptional activation of select genes principally by acetylation of nucleosomal histones H4 and H2A. This modification may both alter nucleosome - DNA interactions and promote interaction of the modified histones with other proteins which positively regulate transcription. This complex may be required for the activation of transcriptional programs associated with oncogene and proto-oncogene mediated growth induction, tumor suppressor mediated growth arrest and replicative senescence, apoptosis, and DNA repair. The NuA4 complex ATPase and helicase activities seem to be, at least in part, contributed by the association of RUVBL1 and RUVBL2 with EP400. NuA4 may also play a direct role in DNA repair when directly recruited to sites of DNA damage. As part of the SIN3B complex represses transcription and counteracts the histone acetyltransferase activity of EP300 through the recognition H3K27ac marks by PHF12 and the activity of the histone deacetylase HDAC2. SIN3B complex is recruited downstream of the constitutively active genes transcriptional start sites through interaction with histones and mitigates histone acetylation and RNA polymerase II progression within transcribed regions contributing to the regulation of transcription. Required for homologous recombination repair (HRR) and resistance to mitomycin C (MMC). Involved in the localization of PALB2, BRCA2 and RAD51, but not BRCA1, to DNA-damage foci. This chain is Mortality factor 4-like protein 1 (MORF4L1), found in Pongo abelii (Sumatran orangutan).